A 106-amino-acid chain; its full sequence is Violacin-A (106 aa).

Residues 1–29 form the signal peptide; it reads MDAQKMKMVIGLVLVATTAFALMIPAASA. Positions 30 to 79 are excised as a propeptide; it reads VDDFITRRAYDNLVKSGAIKDIPVMAKTIISNPVLEEGMLTYYTNKKLGD. Intrachain disulfides connect Cys-84–Cys-98, Cys-88–Cys-100, and Cys-93–Cys-105.

Belongs to the cyclotide family. Moebius subfamily. Post-translationally, violacin-A is not a cyclic peptide.

Its function is as follows. Probably participates in a plant defense mechanism. Has low hemolytic activity. The protein is Violacin-A of Viola odorata (Sweet violet).